The primary structure comprises 386 residues: Methylthioribose-1-phosphate isomerase (386 aa).

Aspartate 255 functions as the Proton donor in the catalytic mechanism.

This sequence belongs to the eIF-2B alpha/beta/delta subunits family. MtnA subfamily.

It is found in the cytoplasm. It localises to the nucleus. The enzyme catalyses 5-(methylsulfanyl)-alpha-D-ribose 1-phosphate = 5-(methylsulfanyl)-D-ribulose 1-phosphate. It participates in amino-acid biosynthesis; L-methionine biosynthesis via salvage pathway; L-methionine from S-methyl-5-thio-alpha-D-ribose 1-phosphate: step 1/6. Functionally, catalyzes the interconversion of methylthioribose-1-phosphate (MTR-1-P) into methylthioribulose-1-phosphate (MTRu-1-P). The sequence is that of Methylthioribose-1-phosphate isomerase from Trypanosoma brucei brucei (strain 927/4 GUTat10.1).